The following is a 76-amino-acid chain: Large ribosomal subunit protein bL28 (76 aa).

It belongs to the bacterial ribosomal protein bL28 family.

In Opitutus terrae (strain DSM 11246 / JCM 15787 / PB90-1), this protein is Large ribosomal subunit protein bL28.